Consider the following 171-residue polypeptide: MPLLDSFTVDHTRMEAPAVRVAKTMNTPHGDTITVFDLRFCIPNKEVMPEKGIHTLEHLFAGFMRNHLNGNGVEIIDISPMGCRTGFYMSLIGTPDEQRVADAWKAAMADVLKVKEQNQIPELNVYQCGTYQMHSLSEAQDIARHILEHDVRINSNEELALPKDKLQELHI.

Fe cation-binding residues include His-54, His-58, and Cys-128.

The protein belongs to the LuxS family. As to quaternary structure, homodimer. Fe cation serves as cofactor.

The catalysed reaction is S-(5-deoxy-D-ribos-5-yl)-L-homocysteine = (S)-4,5-dihydroxypentane-2,3-dione + L-homocysteine. Functionally, involved in the synthesis of autoinducer 2 (AI-2) which is secreted by bacteria and is used to communicate both the cell density and the metabolic potential of the environment. The regulation of gene expression in response to changes in cell density is called quorum sensing. Catalyzes the transformation of S-ribosylhomocysteine (RHC) to homocysteine (HC) and 4,5-dihydroxy-2,3-pentadione (DPD). The sequence is that of S-ribosylhomocysteine lyase from Citrobacter koseri (strain ATCC BAA-895 / CDC 4225-83 / SGSC4696).